The chain runs to 424 residues: Multifunctional CCA protein (424 aa).

ATP-binding residues include Gly-8 and Arg-11. Positions 8 and 11 each coordinate CTP. Mg(2+) is bound by residues Asp-21 and Asp-23. Residues Arg-91, Arg-149, and Arg-152 each contribute to the ATP site. CTP contacts are provided by Arg-91, Arg-149, and Arg-152. The HD domain maps to 238–339 (TGIHLMMVLD…VRLLERCDAF (102 aa)).

Belongs to the tRNA nucleotidyltransferase/poly(A) polymerase family. Bacterial CCA-adding enzyme type 1 subfamily. In terms of assembly, monomer. Can also form homodimers and oligomers. The cofactor is Mg(2+). Requires Ni(2+) as cofactor.

It catalyses the reaction a tRNA precursor + 2 CTP + ATP = a tRNA with a 3' CCA end + 3 diphosphate. It carries out the reaction a tRNA with a 3' CCA end + 2 CTP + ATP = a tRNA with a 3' CCACCA end + 3 diphosphate. In terms of biological role, catalyzes the addition and repair of the essential 3'-terminal CCA sequence in tRNAs without using a nucleic acid template. Adds these three nucleotides in the order of C, C, and A to the tRNA nucleotide-73, using CTP and ATP as substrates and producing inorganic pyrophosphate. tRNA 3'-terminal CCA addition is required both for tRNA processing and repair. Also involved in tRNA surveillance by mediating tandem CCA addition to generate a CCACCA at the 3' terminus of unstable tRNAs. While stable tRNAs receive only 3'-terminal CCA, unstable tRNAs are marked with CCACCA and rapidly degraded. The polypeptide is Multifunctional CCA protein (Polaromonas naphthalenivorans (strain CJ2)).